A 397-amino-acid polypeptide reads, in one-letter code: Enoyl-[acyl-carrier-protein] reductase [NADH] (397 aa).

NAD(+) contacts are provided by residues 48-53 (GASTGY), 74-75 (FE), 111-112 (DA), and 139-140 (VA). Tyrosine 225 lines the substrate pocket. The active-site Proton donor is tyrosine 235. NAD(+) contacts are provided by residues lysine 244 and 273–275 (VVT).

Belongs to the TER reductase family. In terms of assembly, monomer.

The catalysed reaction is a 2,3-saturated acyl-[ACP] + NAD(+) = a (2E)-enoyl-[ACP] + NADH + H(+). It participates in lipid metabolism; fatty acid biosynthesis. Its function is as follows. Involved in the final reduction of the elongation cycle of fatty acid synthesis (FAS II). Catalyzes the reduction of a carbon-carbon double bond in an enoyl moiety that is covalently linked to an acyl carrier protein (ACP). In Burkholderia mallei (strain SAVP1), this protein is Enoyl-[acyl-carrier-protein] reductase [NADH].